We begin with the raw amino-acid sequence, 313 residues long: Beta-ketoacyl-[acyl-carrier-protein] synthase III (313 aa).

Residues Cys112 and His238 contribute to the active site. Residues Gln239–Arg243 are ACP-binding. Asn268 is an active-site residue.

It belongs to the thiolase-like superfamily. FabH family. As to quaternary structure, homodimer.

Its subcellular location is the cytoplasm. The enzyme catalyses malonyl-[ACP] + acetyl-CoA + H(+) = 3-oxobutanoyl-[ACP] + CO2 + CoA. Its pathway is lipid metabolism; fatty acid biosynthesis. Its function is as follows. Catalyzes the condensation reaction of fatty acid synthesis by the addition to an acyl acceptor of two carbons from malonyl-ACP. Catalyzes the first condensation reaction which initiates fatty acid synthesis and may therefore play a role in governing the total rate of fatty acid production. Possesses both acetoacetyl-ACP synthase and acetyl transacylase activities. Its substrate specificity determines the biosynthesis of branched-chain and/or straight-chain of fatty acids. This is Beta-ketoacyl-[acyl-carrier-protein] synthase III from Staphylococcus epidermidis (strain ATCC 35984 / DSM 28319 / BCRC 17069 / CCUG 31568 / BM 3577 / RP62A).